Here is a 375-residue protein sequence, read N- to C-terminus: Queuine tRNA-ribosyltransferase (375 aa).

Asp-89 acts as the Proton acceptor in catalysis. Substrate contacts are provided by residues 89-93 (DSGGF), Asp-143, Gln-187, and Gly-214. An RNA binding region spans residues 245 to 251 (GVGKPED). Asp-264 acts as the Nucleophile in catalysis. An RNA binding; important for wobble base 34 recognition region spans residues 269-273 (TRNAR). 4 residues coordinate Zn(2+): Cys-302, Cys-304, Cys-307, and His-333.

This sequence belongs to the queuine tRNA-ribosyltransferase family. As to quaternary structure, homodimer. Within each dimer, one monomer is responsible for RNA recognition and catalysis, while the other monomer binds to the replacement base PreQ1. Requires Zn(2+) as cofactor.

The enzyme catalyses 7-aminomethyl-7-carbaguanine + guanosine(34) in tRNA = 7-aminomethyl-7-carbaguanosine(34) in tRNA + guanine. The protein operates within tRNA modification; tRNA-queuosine biosynthesis. Functionally, catalyzes the base-exchange of a guanine (G) residue with the queuine precursor 7-aminomethyl-7-deazaguanine (PreQ1) at position 34 (anticodon wobble position) in tRNAs with GU(N) anticodons (tRNA-Asp, -Asn, -His and -Tyr). Catalysis occurs through a double-displacement mechanism. The nucleophile active site attacks the C1' of nucleotide 34 to detach the guanine base from the RNA, forming a covalent enzyme-RNA intermediate. The proton acceptor active site deprotonates the incoming PreQ1, allowing a nucleophilic attack on the C1' of the ribose to form the product. After dissociation, two additional enzymatic reactions on the tRNA convert PreQ1 to queuine (Q), resulting in the hypermodified nucleoside queuosine (7-(((4,5-cis-dihydroxy-2-cyclopenten-1-yl)amino)methyl)-7-deazaguanosine). The sequence is that of Queuine tRNA-ribosyltransferase from Enterobacter sp. (strain 638).